Reading from the N-terminus, the 191-residue chain is Large ribosomal subunit protein uL3 (191 aa).

Residues 115–137 (GGPASHGSRFHRRHGSIGNREWP) form a disordered region.

The protein belongs to the universal ribosomal protein uL3 family. Part of the 50S ribosomal subunit. Forms a cluster with proteins L14 and L19.

One of the primary rRNA binding proteins, it binds directly near the 3'-end of the 23S rRNA, where it nucleates assembly of the 50S subunit. In Campylobacter jejuni subsp. jejuni serotype O:2 (strain ATCC 700819 / NCTC 11168), this protein is Large ribosomal subunit protein uL3 (rplC).